We begin with the raw amino-acid sequence, 408 residues long: MANINENYLKLKAGYLFPEISKRVKTYSEKNPSAKIIRLGIGDVTLPIVPSVVDAMIAASKEMGTAGGFHGYGPEQGYSFLLKSIANNDYGSLGIKIDESEIFVSDGSKCDCGNIQEIFSTDAKIAVSDPVYPVYVDTNVMAGRTGEIGADGRYSNLIYMPATKENGFQPEIPKEKADIIYLCYPNNPTGTVTTKKALRAWVEYAKKNNSIILYDSAYEAFISEPGVPRSIYEVAGAKEVAIEFRSFSKTAGFTGLRCAYIVIPKELKGRTRGGEEVSINSLWSRRHTTKFNGVSYVTQKGAEACYSPQGKKEIQASIAYYMSNAAKIREGLKKAGYEVFGGVNAPYIWLKTSDNLSSWDFFDRLLDKAQVVGTPGSGFGPAGEGYFRLSAFGKKEDVEEAIARISFL.

The substrate site is built by Tyr15 and Gly42. Residues Tyr72, 108–109 (SK), Tyr132, Asn187, Tyr218, and 246–248 (SFS) contribute to the pyridoxal 5'-phosphate site. Residues Lys109, Tyr132, and Asn187 each contribute to the substrate site. Lys249 carries the N6-(pyridoxal phosphate)lysine modification. Positions 257 and 292 each coordinate pyridoxal 5'-phosphate. Substrate is bound by residues Asn292 and Arg388.

The protein belongs to the class-I pyridoxal-phosphate-dependent aminotransferase family. LL-diaminopimelate aminotransferase subfamily. As to quaternary structure, homodimer. It depends on pyridoxal 5'-phosphate as a cofactor.

It catalyses the reaction (2S,6S)-2,6-diaminopimelate + 2-oxoglutarate = (S)-2,3,4,5-tetrahydrodipicolinate + L-glutamate + H2O + H(+). It participates in amino-acid biosynthesis; L-lysine biosynthesis via DAP pathway; LL-2,6-diaminopimelate from (S)-tetrahydrodipicolinate (aminotransferase route): step 1/1. Involved in the synthesis of meso-diaminopimelate (m-DAP or DL-DAP), required for both lysine and peptidoglycan biosynthesis. Catalyzes the direct conversion of tetrahydrodipicolinate to LL-diaminopimelate. The polypeptide is LL-diaminopimelate aminotransferase (Leptospira borgpetersenii serovar Hardjo-bovis (strain L550)).